A 105-amino-acid chain; its full sequence is Unclassified hydrophobin D (105 aa).

Positions 1–18 (MKFYIVLLALAAFAMAEA) are cleaved as a signal peptide. 3 disulfides stabilise this stretch: Cys35/Cys86, Cys42/Cys83, and Cys43/Cys49.

The protein localises to the secreted. The protein resides in the cell wall. Its function is as follows. Aerial growth, conidiation, and dispersal of filamentous fungi in the environment rely upon a capability of their secreting small amphipathic proteins called hydrophobins (HPBs) with low sequence identity. Class I can self-assemble into an outermost layer of rodlet bundles on aerial cell surfaces, conferring cellular hydrophobicity that supports fungal growth, development and dispersal; whereas Class II form highly ordered films at water-air interfaces through intermolecular interactions but contribute nothing to the rodlet structure. In P.expansum, hydrophobins contribute to germination, tolerance to cold stress and mycotoxins patulin and citrinin production. This Penicillium expansum (Blue mold rot fungus) protein is Unclassified hydrophobin D.